Reading from the N-terminus, the 78-residue chain is Large ribosomal subunit protein bL28 (78 aa).

Belongs to the bacterial ribosomal protein bL28 family.

The chain is Large ribosomal subunit protein bL28 (rpmB) from Xylella fastidiosa (strain 9a5c).